Reading from the N-terminus, the 610-residue chain is Probable indole-3-acetic acid-amido synthetase GH3.1 (610 aa).

Belongs to the IAA-amido conjugating enzyme family. As to expression, expressed in flowers.

Functionally, may catalyze the synthesis of indole-3-acetic acid (IAA)-amino acid conjugates, providing a mechanism for the plant to cope with the presence of excess auxin. The sequence is that of Probable indole-3-acetic acid-amido synthetase GH3.1 (GH3.1) from Oryza sativa subsp. japonica (Rice).